The primary structure comprises 180 residues: Large ribosomal subunit protein uL6 (180 aa).

This sequence belongs to the universal ribosomal protein uL6 family. Part of the 50S ribosomal subunit.

Functionally, this protein binds to the 23S rRNA, and is important in its secondary structure. It is located near the subunit interface in the base of the L7/L12 stalk, and near the tRNA binding site of the peptidyltransferase center. The sequence is that of Large ribosomal subunit protein uL6 from Anaeromyxobacter dehalogenans (strain 2CP-1 / ATCC BAA-258).